The primary structure comprises 295 residues: Alpha-soluble NSF attachment protein (295 aa).

M1 is subject to N-acetylmethionine. S26, S29, and S195 each carry phosphoserine.

Belongs to the SNAP family. In terms of assembly, interacts with PRKCABP, and disrupts the interaction between GRIA2 and PRKCABP, leading to the internalization of GRIA2. Found in a complex with VAMP8. Component of a SNARE-like complex that contains at least ZW10, USE1L, RINT1, STX18 and NAPA/SNAP-alpha. Interacts with VTI1A. Interacts with STX12. Interacts with GNA12 (via N-terminus); the interaction promotes CDH5 localization to plasma membrane.

The protein resides in the cell membrane. Functionally, required for vesicular transport between the endoplasmic reticulum and the Golgi apparatus. Together with GNA12 promotes CDH5 localization to plasma membrane. This chain is Alpha-soluble NSF attachment protein (NAPA), found in Homo sapiens (Human).